A 436-amino-acid chain; its full sequence is 3-phosphoshikimate 1-carboxyvinyltransferase (436 aa).

3-phosphoshikimate contacts are provided by Lys-23, Ser-24, and Arg-28. Lys-23 lines the phosphoenolpyruvate pocket. Residues Gly-97 and Arg-126 each contribute to the phosphoenolpyruvate site. 3-phosphoshikimate-binding residues include Ser-171, Gln-173, Asp-323, and Lys-350. A phosphoenolpyruvate-binding site is contributed by Gln-173. Asp-323 functions as the Proton acceptor in the catalytic mechanism. Residues Arg-354 and Arg-396 each coordinate phosphoenolpyruvate.

This sequence belongs to the EPSP synthase family. Monomer.

Its subcellular location is the cytoplasm. The enzyme catalyses 3-phosphoshikimate + phosphoenolpyruvate = 5-O-(1-carboxyvinyl)-3-phosphoshikimate + phosphate. Its pathway is metabolic intermediate biosynthesis; chorismate biosynthesis; chorismate from D-erythrose 4-phosphate and phosphoenolpyruvate: step 6/7. Catalyzes the transfer of the enolpyruvyl moiety of phosphoenolpyruvate (PEP) to the 5-hydroxyl of shikimate-3-phosphate (S3P) to produce enolpyruvyl shikimate-3-phosphate and inorganic phosphate. This Prochlorococcus marinus (strain MIT 9301) protein is 3-phosphoshikimate 1-carboxyvinyltransferase.